A 319-amino-acid chain; its full sequence is Cobalamin biosynthesis protein CbiB (319 aa).

The next 4 membrane-spanning stretches (helical) occupy residues 56 to 76 (VMWV…LALA), 82 to 102 (WFGW…RSLA), 153 to 173 (VDGI…LAMA), and 296 to 316 (LMWV…CGLS).

The protein belongs to the CobD/CbiB family.

Its subcellular location is the cell membrane. It functions in the pathway cofactor biosynthesis; adenosylcobalamin biosynthesis. Converts cobyric acid to cobinamide by the addition of aminopropanol on the F carboxylic group. However, the true cosubstrate could be (R)-1-amino-2-propanol O-2-phosphate, leading to cobinamide phosphate. The sequence is that of Cobalamin biosynthesis protein CbiB from Salmonella paratyphi A (strain ATCC 9150 / SARB42).